We begin with the raw amino-acid sequence, 233 residues long: Octanoyltransferase (233 aa).

Residues 32-213 enclose the BPL/LPL catalytic domain; that stretch reads NNIDGILLLL…NFKMIFETDL (182 aa). Residues 77-84, 144-146, and 157-159 contribute to the substrate site; these read RGGNVTYH, AIG, and GFA. The active-site Acyl-thioester intermediate is C175.

It belongs to the LipB family.

The protein resides in the cytoplasm. The catalysed reaction is octanoyl-[ACP] + L-lysyl-[protein] = N(6)-octanoyl-L-lysyl-[protein] + holo-[ACP] + H(+). Its pathway is protein modification; protein lipoylation via endogenous pathway; protein N(6)-(lipoyl)lysine from octanoyl-[acyl-carrier-protein]: step 1/2. Its function is as follows. Catalyzes the transfer of endogenously produced octanoic acid from octanoyl-acyl-carrier-protein onto the lipoyl domains of lipoate-dependent enzymes. Lipoyl-ACP can also act as a substrate although octanoyl-ACP is likely to be the physiological substrate. The polypeptide is Octanoyltransferase (Clostridium kluyveri (strain ATCC 8527 / DSM 555 / NBRC 12016 / NCIMB 10680 / K1)).